The following is a 398-amino-acid chain: Bombesin receptor subtype-3 (398 aa).

Over 1–40 the chain is Extracellular; it reads MAQRQPHSPNQTLISITNDTESSSVVSNDNTNKGRSGDNS. 2 N-linked (GlcNAc...) asparagine glycosylation sites follow: N10 and N18. The chain crosses the membrane as a helical span at residues 41-62; the sequence is PGIEALCAIYITYAVIISVGIL. The Cytoplasmic portion of the chain corresponds to 63-81; it reads GNAILIKVFFKTKSMQTVP. A helical transmembrane segment spans residues 82-102; sequence NIFITSLAFGDLLLLLTCVPV. Residues 103–120 lie on the Extracellular side of the membrane; that stretch reads DATHYLAEGWLFGRIGCK. C119 and C202 are disulfide-bonded. Residues 121–142 form a helical membrane-spanning segment; the sequence is VLSFIRLTSVGVSVFTLTILSA. Residues 143–162 lie on the Cytoplasmic side of the membrane; sequence DRYKAVVKPLERQPSNAILK. Residues 163–183 form a helical membrane-spanning segment; sequence TCIKAGCVWIVSMIFALPEAI. The Extracellular portion of the chain corresponds to 184–219; the sequence is FSNVYSFRDPNKNVTFESCTSYPVSKKLLQEIHSLL. Residues 220–240 form a helical membrane-spanning segment; the sequence is CFLVFYIIPLSIISVYYSLIA. Over 241 to 271 the chain is Cytoplasmic; the sequence is RTLYKSTLNIPTEEQGHARKQIESRKRIART. The chain crosses the membrane as a helical span at residues 272–292; the sequence is VLVLVALFALCWLPNHLLYLY. Over 293 to 312 the chain is Extracellular; the sequence is HSFTSQTYVDPSAMHFIFTI. Residues 313–332 form a helical membrane-spanning segment; sequence FSRVLAFSNSCVNPFALYWL. Residues 333-398 are Cytoplasmic-facing; that stretch reads SKTFQKHFKA…CSVKQAEDRV (66 aa). C346 carries S-palmitoyl cysteine lipidation.

It belongs to the G-protein coupled receptor 1 family. Interacts with C6orf89.

Its subcellular location is the cell membrane. Its function is as follows. Role in sperm cell division, maturation, or function. This receptor mediates its action by association with G proteins that activate a phosphatidylinositol-calcium second messenger system. The chain is Bombesin receptor subtype-3 (BRS3) from Macaca mulatta (Rhesus macaque).